The following is a 265-amino-acid chain: GTP cyclohydrolase FolE2 (265 aa).

This sequence belongs to the GTP cyclohydrolase IV family.

It catalyses the reaction GTP + H2O = 7,8-dihydroneopterin 3'-triphosphate + formate + H(+). The protein operates within cofactor biosynthesis; 7,8-dihydroneopterin triphosphate biosynthesis; 7,8-dihydroneopterin triphosphate from GTP: step 1/1. Converts GTP to 7,8-dihydroneopterin triphosphate. The polypeptide is GTP cyclohydrolase FolE2 (Magnetococcus marinus (strain ATCC BAA-1437 / JCM 17883 / MC-1)).